The primary structure comprises 380 residues: Probable protein phosphatase 2C 27 (380 aa).

A PPM-type phosphatase domain is found at 84–344 (RSGSCAEQGA…DNLTVIVVCF (261 aa)). 4 residues coordinate Mn(2+): D128, G129, D292, and D335.

This sequence belongs to the PP2C family. Mg(2+) is required as a cofactor. Requires Mn(2+) as cofactor. Expressed in roots, leaves, stems, flower, and trichomes.

It is found in the nucleus. It localises to the cytoplasm. It carries out the reaction O-phospho-L-seryl-[protein] + H2O = L-seryl-[protein] + phosphate. It catalyses the reaction O-phospho-L-threonyl-[protein] + H2O = L-threonyl-[protein] + phosphate. Its function is as follows. Confers salt tolerance by triggering the expression of stress-responsive genes. The protein is Probable protein phosphatase 2C 27 of Arabidopsis thaliana (Mouse-ear cress).